Here is a 269-residue protein sequence, read N- to C-terminus: Integral membrane protein 2C (269 aa).

The residue at position 39 (threonine 39) is a Phosphothreonine. The chain crosses the membrane as a helical; Signal-anchor for type II membrane protein span at residues 57–77 (VGGVCYLSMGMVVLLMGLVFA). Residues 138–232 (FGGGDPADII…LCNGKDTYRL (95 aa)) enclose the BRICHOS domain. Cysteine 165 and cysteine 224 form a disulfide bridge. Asparagine 171 carries an N-linked (GlcNAc...) asparagine glycan.

This sequence belongs to the ITM2 family. As to quaternary structure, interacts with BACE1. Interacts with APP. Interacts with STMN2. Post-translationally, type I membrane-bound, as well as soluble, furin has a pre-eminent role in ITM2C proteolytic processing. PCSK7 and PCSK5 may also be involved although to a lesser extent. The soluble form of PCSK7 is incapable of processing ITM2C. Fails to undergo shedding by ADAM10 and intramembrane cleavage by SPPL2B.

It localises to the lysosome membrane. The protein localises to the cell membrane. Negative regulator of amyloid-beta peptide production. May inhibit the processing of APP by blocking its access to alpha- and beta-secretase. Binding to the beta-secretase-cleaved APP C-terminal fragment is negligible, suggesting that ITM2C is a poor gamma-secretase cleavage inhibitor. May play a role in TNF-induced cell death and neuronal differentiation. This chain is Integral membrane protein 2C (Itm2c), found in Mus musculus (Mouse).